The primary structure comprises 318 residues: Ribosomal RNA small subunit methyltransferase H (318 aa).

Residues 38 to 40, Asp-57, Leu-91, Asp-105, and Gln-112 each bind S-adenosyl-L-methionine; that span reads AGH.

It belongs to the methyltransferase superfamily. RsmH family.

Its subcellular location is the cytoplasm. It catalyses the reaction cytidine(1402) in 16S rRNA + S-adenosyl-L-methionine = N(4)-methylcytidine(1402) in 16S rRNA + S-adenosyl-L-homocysteine + H(+). Its function is as follows. Specifically methylates the N4 position of cytidine in position 1402 (C1402) of 16S rRNA. The protein is Ribosomal RNA small subunit methyltransferase H of Clavibacter sepedonicus (Clavibacter michiganensis subsp. sepedonicus).